Reading from the N-terminus, the 708-residue chain is Ribosomal RNA large subunit methyltransferase K/L (708 aa).

Positions Gln-43–Met-154 constitute a THUMP domain.

The protein belongs to the methyltransferase superfamily. RlmKL family.

It localises to the cytoplasm. The catalysed reaction is guanosine(2445) in 23S rRNA + S-adenosyl-L-methionine = N(2)-methylguanosine(2445) in 23S rRNA + S-adenosyl-L-homocysteine + H(+). It carries out the reaction guanosine(2069) in 23S rRNA + S-adenosyl-L-methionine = N(2)-methylguanosine(2069) in 23S rRNA + S-adenosyl-L-homocysteine + H(+). Functionally, specifically methylates the guanine in position 2445 (m2G2445) and the guanine in position 2069 (m7G2069) of 23S rRNA. The polypeptide is Ribosomal RNA large subunit methyltransferase K/L (Vibrio cholerae serotype O1 (strain ATCC 39541 / Classical Ogawa 395 / O395)).